Consider the following 331-residue polypeptide: 6-phosphogluconolactonase (331 aa).

It belongs to the cycloisomerase 2 family.

It catalyses the reaction 6-phospho-D-glucono-1,5-lactone + H2O = 6-phospho-D-gluconate + H(+). Its pathway is carbohydrate degradation; pentose phosphate pathway; D-ribulose 5-phosphate from D-glucose 6-phosphate (oxidative stage): step 2/3. Its function is as follows. Catalyzes the hydrolysis of 6-phosphogluconolactone to 6-phosphogluconate. This chain is 6-phosphogluconolactonase, found in Salmonella gallinarum (strain 287/91 / NCTC 13346).